The primary structure comprises 351 residues: DNA polymerase IV (351 aa).

The UmuC domain maps to 4 to 185 (IIHIDMDCFF…LPLAKIPGVG (182 aa)). Mg(2+) is bound by residues Asp8 and Asp103. Glu104 is a catalytic residue.

The protein belongs to the DNA polymerase type-Y family. In terms of assembly, monomer. Mg(2+) serves as cofactor.

The protein resides in the cytoplasm. It carries out the reaction DNA(n) + a 2'-deoxyribonucleoside 5'-triphosphate = DNA(n+1) + diphosphate. In terms of biological role, poorly processive, error-prone DNA polymerase involved in untargeted mutagenesis. Copies undamaged DNA at stalled replication forks, which arise in vivo from mismatched or misaligned primer ends. These misaligned primers can be extended by PolIV. Exhibits no 3'-5' exonuclease (proofreading) activity. May be involved in translesional synthesis, in conjunction with the beta clamp from PolIII. This chain is DNA polymerase IV, found in Salmonella paratyphi A (strain ATCC 9150 / SARB42).